A 32-amino-acid chain; its full sequence is Potassium channel toxin alpha-KTx 9.4 (32 aa).

Intrachain disulfides connect cysteine 3–cysteine 19, cysteine 6–cysteine 24, and cysteine 10–cysteine 26.

As to expression, expressed by the venom gland.

It localises to the secreted. Blocker of human voltage-gated potassium channel Kv1.1/KCNA1. The protein is Potassium channel toxin alpha-KTx 9.4 of Hottentotta tamulus (Eastern Indian scorpion).